We begin with the raw amino-acid sequence, 1198 residues long: Fibronectin type-III domain-containing protein 3a (1198 aa).

The segment covering Lys189–Leu201 has biased composition (basic and acidic residues). The disordered stretch occupies residues Lys189–Lys256. The span at Gly229 to Ser247 shows a compositional bias: low complexity. Fibronectin type-III domains lie at Asn269–Cys370, Ala374–Thr466, Thr470–Asp563, Ala567–Val661, Pro665–Gly758, Gln762–Ser852, Ser864–Leu951, Pro952–Ser1045, and Val1046–Pro1151. The segment at Ser553–Lys574 is disordered. A helical transmembrane segment spans residues Val1172–Ile1192.

Belongs to the FNDC3 family.

The protein localises to the golgi apparatus membrane. The chain is Fibronectin type-III domain-containing protein 3a (FNDC3A) from Gallus gallus (Chicken).